A 333-amino-acid polypeptide reads, in one-letter code: Methionine import ATP-binding protein MetN 1 (333 aa).

Positions 2 to 241 (ITFEGVEKVY…PETETAKSFV (240 aa)) constitute an ABC transporter domain. An ATP-binding site is contributed by 38–45 (GFSGAGKS).

It belongs to the ABC transporter superfamily. Methionine importer (TC 3.A.1.24) family. In terms of assembly, the complex is composed of two ATP-binding proteins (MetN), two transmembrane proteins (MetI) and a solute-binding protein (MetQ).

It is found in the cell membrane. The enzyme catalyses L-methionine(out) + ATP + H2O = L-methionine(in) + ADP + phosphate + H(+). It catalyses the reaction D-methionine(out) + ATP + H2O = D-methionine(in) + ADP + phosphate + H(+). In terms of biological role, part of the ABC transporter complex MetNIQ involved in methionine import. Responsible for energy coupling to the transport system. The polypeptide is Methionine import ATP-binding protein MetN 1 (Bacillus licheniformis (strain ATCC 14580 / DSM 13 / JCM 2505 / CCUG 7422 / NBRC 12200 / NCIMB 9375 / NCTC 10341 / NRRL NRS-1264 / Gibson 46)).